Consider the following 200-residue polypeptide: Dephospho-CoA kinase (200 aa).

The region spanning 4-200 is the DPCK domain; that stretch reads TIGLTGSVAT…TFIKRFVKNK (197 aa). 12-17 lines the ATP pocket; that stretch reads ATGKST.

Belongs to the CoaE family.

It is found in the cytoplasm. The catalysed reaction is 3'-dephospho-CoA + ATP = ADP + CoA + H(+). Its pathway is cofactor biosynthesis; coenzyme A biosynthesis; CoA from (R)-pantothenate: step 5/5. Functionally, catalyzes the phosphorylation of the 3'-hydroxyl group of dephosphocoenzyme A to form coenzyme A. This Listeria monocytogenes serotype 4b (strain F2365) protein is Dephospho-CoA kinase.